We begin with the raw amino-acid sequence, 187 residues long: ECF RNA polymerase sigma factor SigK (187 aa).

The tract at residues 30–96 is sigma-70 factor domain-2; it reads YDHTCTRVYG…RAVDRVRAEQ (67 aa). The short motif at 53-56 is the Interaction with polymerase core subunit RpoC element; the sequence is ETTQ. The interval 133–182 is sigma-70 factor domain-4; sequence CLDGLTDTQRQCIELAYYGGLTYAEVSQRLATNLSTIKSRMRDALRGLRN. The H-T-H motif DNA-binding region spans 155 to 174; sequence YAEVSQRLATNLSTIKSRMR.

This sequence belongs to the sigma-70 factor family. ECF subfamily. As to quaternary structure, interacts transiently with the RNA polymerase catalytic core formed by RpoA, RpoB, RpoC and RpoZ (2 alpha, 1 beta, 1 beta' and 1 omega subunit) to form the RNA polymerase holoenzyme that can initiate transcription. Interacts (via sigma-70 factor domain 4) with anti-sigma-K factor RskA.

In terms of biological role, sigma factors are initiation factors that promote the attachment of RNA polymerase to specific initiation sites and are then released. Extracytoplasmic function (ECF) sigma factors are held in an inactive form by an anti-sigma factor until released by regulated intramembrane proteolysis. The protein is ECF RNA polymerase sigma factor SigK (sigK) of Mycobacterium ulcerans (strain Agy99).